The following is a 325-amino-acid chain: Pseudouridylate synthase TRUB2, mitochondrial (325 aa).

The Nucleophile role is filled by aspartate 101. The interval 292-325 (QTEGVSRGNPDREAAEGPIPGPSRGAEGEGELRA) is disordered.

The protein belongs to the pseudouridine synthase TruB family.

Its subcellular location is the mitochondrion matrix. The enzyme catalyses a uridine in mRNA = a pseudouridine in mRNA. It catalyses the reaction uridine(55) in tRNA = pseudouridine(55) in tRNA. Its function is as follows. Minor enzyme contributing to the isomerization of uridine to pseudouridine (pseudouridylation) of specific mitochondrial mRNAs (mt-mRNAs) such as COXI and COXIII mt-mRNAs, modulating the efficiency of mitochondrial protein synthesis without changes in transcript abundance or stability. Also catalyzes pseudouridylation of some tRNAs, including synthesis of pseudouridine(55) from uracil-55, in the psi GC loop of a subset of tRNAs. This chain is Pseudouridylate synthase TRUB2, mitochondrial, found in Xenopus tropicalis (Western clawed frog).